The sequence spans 411 residues: Lissencephaly-1 homolog (411 aa).

The region spanning 9–41 is the LisH domain; sequence QREELNQAIADYLGTNGYADSLEAFRKEADLST. Residues 56 to 83 are a coiled coil; sequence TSVIRLQKKVMELEAKLTEAEKEVIEGA. WD repeat units lie at residues 106–147, 148–187, 191–230, 233–272, 275–334, 337–376, and 379–411; these read GHRA…RTLK, GHTD…ECVK, GHDH…CVKT, GHRE…CKVE, DHEH…CLLT, GHDN…CMKT, and AHQH…WECR.

Belongs to the WD repeat LIS1/nudF family.

Its subcellular location is the cytoplasm. The protein localises to the cytoskeleton. It localises to the microtubule organizing center. The protein resides in the centrosome. In terms of biological role, positively regulates the activity of the minus-end directed microtubule motor protein dynein. May enhance dynein-mediated microtubule sliding by targeting dynein to the microtubule plus end. Required for several dynein- and microtubule-dependent processes. The chain is Lissencephaly-1 homolog from Drosophila grimshawi (Hawaiian fruit fly).